The primary structure comprises 359 residues: Olfactory receptor 5T2 (359 aa).

The Extracellular segment spans residues 1–64; the sequence is MSYSIYKSTV…GFTDNLELQT (64 aa). N44 is a glycosylation site (N-linked (GlcNAc...) asparagine). The helical transmembrane segment at 65–85 threads the bilayer; it reads IFFFLFLAIYLFTLMGNLGLI. The Cytoplasmic segment spans residues 86-93; it reads LVVIRDSQ. A helical transmembrane segment spans residues 94 to 114; that stretch reads LHKPMYYFLSMLSSVDACYSS. Residues 115 to 138 lie on the Extracellular side of the membrane; that stretch reads VITPNMLVDFTTKNKVISFLGCVA. The helical transmembrane segment at 139 to 159 threads the bilayer; the sequence is QVFLACSFGTTECFLLAAMAY. Over 160-178 the chain is Cytoplasmic; sequence DRYVAIYNPLLYSVSMSPR. A helical membrane pass occupies residues 179–199; sequence VYMPLINASYVAGILHATIHT. Over 200 to 235 the chain is Extracellular; the sequence is VATFSLSFCGANEIRRVFCDIPPLLAISYSDTHTNQ. The chain crosses the membrane as a helical span at residues 236-256; it reads LLLFYFVGSIELVTILIVLIS. The Cytoplasmic segment spans residues 257 to 276; the sequence is YGLILLAILKMYSAEGRRKV. A helical transmembrane segment spans residues 277–297; sequence FSTCGAHLTGVSIYYGTILFM. Over 298 to 310 the chain is Extracellular; the sequence is YVRPSSSYASDHD. Residues 311 to 331 traverse the membrane as a helical segment; sequence MIVSIFYTIVIPLLNPVIYSL. Residues 332-359 lie on the Cytoplasmic side of the membrane; the sequence is RNKDVKDSMKKMFGKNQVINKVYFHTKK.

This sequence belongs to the G-protein coupled receptor 1 family.

It localises to the cell membrane. Its function is as follows. Odorant receptor. The chain is Olfactory receptor 5T2 (OR5T2) from Homo sapiens (Human).